The sequence spans 164 residues: Peptidyl-prolyl cis-trans isomerase (164 aa).

Residues 7 to 163 (FFDLQANGEN…KKITIADCGQ (157 aa)) form the PPIase cyclophilin-type domain.

It belongs to the cyclophilin-type PPIase family. PPIase A subfamily.

The protein resides in the cytoplasm. It catalyses the reaction [protein]-peptidylproline (omega=180) = [protein]-peptidylproline (omega=0). Binds cyclosporin A (CsA). CsA mediates some of its effects via an inhibitory action on PPIase. Functionally, PPIases accelerate the folding of proteins. It catalyzes the cis-trans isomerization of proline imidic peptide bonds in oligopeptides. The protein is Peptidyl-prolyl cis-trans isomerase of Hemicentrotus pulcherrimus (Sea urchin).